Consider the following 78-residue polypeptide: MPKRILQGVVVSDKGAKTIVVRVERTFLHPLLRKTVRRTKRYHAHDEANAYKVGDQVQIQECAPKSKLKRWEVVTVAA.

Belongs to the universal ribosomal protein uS17 family. Part of the 30S ribosomal subunit.

Functionally, one of the primary rRNA binding proteins, it binds specifically to the 5'-end of 16S ribosomal RNA. This Maricaulis maris (strain MCS10) (Caulobacter maris) protein is Small ribosomal subunit protein uS17.